A 277-amino-acid polypeptide reads, in one-letter code: UBX domain-containing protein 10 (277 aa).

Residues 1 to 102 (MAIEAPVNFA…APDEMPELLL (102 aa)) are disordered. Residues 16–31 (TVVSTAGDSSTWQPSS) show a composition bias toward polar residues. Residues 35-50 (HVIRPKSAKGRKRPNL) show a composition bias toward basic residues. A compositionally biased stretch (low complexity) spans 60-77 (SPSALSSSPPPRSSGSPS). A Phosphoserine modification is found at S88. The UBX domain occupies 191 to 268 (DEEPRLLLAV…GILHKSVLGI (78 aa)).

The protein belongs to the UBXN10 family. In terms of assembly, interacts with CLUAP1; the interaction is direct and mediates interaction with the intraflagellar transport complex B (IFT-B). Interacts with VCP; the interaction is direct.

Its subcellular location is the cell projection. The protein resides in the cilium. In terms of biological role, VCP/p97-binding protein required for ciliogenesis. Acts as a tethering factor that facilitates recruitment of VCP/p97 to the intraflagellar transport complex B (IFT-B) in cilia. UBX domain-containing proteins act as tethering factors for VCP/p97 and may specify substrate specificity of VCP/p97. The chain is UBX domain-containing protein 10 from Mus musculus (Mouse).